A 428-amino-acid polypeptide reads, in one-letter code: MRGREDANARVLGSQWGDEGKGKLVDILAREYDVVARCQGGANAGHTIYDDDGKKYALHLVPSGILNENATCVVGNGVVVHLPGMFDEIDALLKAGVDARGRMMVSDRAHLLFDLHKEIDGLREAELSGNKIGTTKRGIGPAYASKATRNGVRLGDIRDADKFANALRTLAADAAARFDGFEYDVEAEIVRYREIASRIEPFIADTVEYVNDAHRNGKKILVEGANATMLDLDFGTYPFVTSSNPAIGGVSNGLGLAPRKFETIIGVAKAYTTRVGAGPYPTELFGDVADKLRELGYEYGTTTGRPRRIGWLDMVALNYANQINGFTHLNITKLDVLSEMDELKIGVAYELPNGKTTTAFPADIATLENVKVVYETLPGWKTDIANVRSWDDMPENAKKYILRCEELSGVECRYIGVGPGRDAMVIKP.

GTP is bound by residues 17-23 (GDEGKGK) and 45-47 (GHT). The Proton acceptor role is filled by aspartate 18. Positions 18 and 45 each coordinate Mg(2+). IMP contacts are provided by residues 18–21 (DEGK), 43–46 (NAGH), threonine 135, arginine 149, asparagine 226, threonine 241, and arginine 305. Catalysis depends on histidine 46, which acts as the Proton donor. 301 to 307 (TTTGRPR) contacts substrate. GTP is bound by residues arginine 307, 333-335 (KLD), and 416-418 (GVG).

This sequence belongs to the adenylosuccinate synthetase family. As to quaternary structure, homodimer. Requires Mg(2+) as cofactor.

The protein localises to the plastid. Its subcellular location is the chloroplast. It catalyses the reaction IMP + L-aspartate + GTP = N(6)-(1,2-dicarboxyethyl)-AMP + GDP + phosphate + 2 H(+). Its pathway is purine metabolism; AMP biosynthesis via de novo pathway; AMP from IMP: step 1/2. Its function is as follows. Plays an important role in the de novo pathway and in the salvage pathway of purine nucleotide biosynthesis. Catalyzes the first committed step in the biosynthesis of AMP from IMP. This chain is Adenylosuccinate synthetase, chloroplastic, found in Ostreococcus lucimarinus (strain CCE9901).